The sequence spans 191 residues: Holliday junction branch migration complex subunit RuvA (191 aa).

The tract at residues 1 to 64 (MIGKLTGTLL…EDAQLLYGFA (64 aa)) is domain I. The segment at 65–140 (TAPERQAFRA…KLGADLGASH (76 aa)) is domain II. Residues 140–142 (HGP) are flexible linker. Residues 143–191 (AVSGAQADILQALLALGYNDKEAAAALKALPAQVEVSDGIKWALKALTK) are domain III.

Belongs to the RuvA family. As to quaternary structure, homotetramer. Forms an RuvA(8)-RuvB(12)-Holliday junction (HJ) complex. HJ DNA is sandwiched between 2 RuvA tetramers; dsDNA enters through RuvA and exits via RuvB. An RuvB hexamer assembles on each DNA strand where it exits the tetramer. Each RuvB hexamer is contacted by two RuvA subunits (via domain III) on 2 adjacent RuvB subunits; this complex drives branch migration. In the full resolvosome a probable DNA-RuvA(4)-RuvB(12)-RuvC(2) complex forms which resolves the HJ.

It is found in the cytoplasm. Functionally, the RuvA-RuvB-RuvC complex processes Holliday junction (HJ) DNA during genetic recombination and DNA repair, while the RuvA-RuvB complex plays an important role in the rescue of blocked DNA replication forks via replication fork reversal (RFR). RuvA specifically binds to HJ cruciform DNA, conferring on it an open structure. The RuvB hexamer acts as an ATP-dependent pump, pulling dsDNA into and through the RuvAB complex. HJ branch migration allows RuvC to scan DNA until it finds its consensus sequence, where it cleaves and resolves the cruciform DNA. This Verminephrobacter eiseniae (strain EF01-2) protein is Holliday junction branch migration complex subunit RuvA.